A 92-amino-acid chain; its full sequence is Small ribosomal subunit protein uS19 (92 aa).

This sequence belongs to the universal ribosomal protein uS19 family.

Functionally, protein S19 forms a complex with S13 that binds strongly to the 16S ribosomal RNA. The protein is Small ribosomal subunit protein uS19 of Bacillus thuringiensis subsp. konkukian (strain 97-27).